We begin with the raw amino-acid sequence, 397 residues long: Alpha-2B adrenergic receptor (397 aa).

The chain crosses the membrane as a helical span at residues 1–25 (AIAAIIIFLILFTIFGNALVILAVL). The Cytoplasmic segment spans residues 26–36 (TSRSLRAPQNL). The helical transmembrane segment at 37 to 62 (FLVSLAAADILVATLIIPFSLANELL) threads the bilayer. Over 63–72 (GYWYFRRMWC) the chain is Extracellular. The cysteines at positions 72 and 151 are disulfide-linked. The helical transmembrane segment at 73–95 (KVYLALDVLFCTSSIVHLCAISL) threads the bilayer. Topologically, residues 96–117 (DRYWAVSRALEYNSKRTPRRIK) are cytoplasmic. Residues 118–140 (CIILMVWLIAAVISLPSLVYKGD) traverse the membrane as a helical segment. Over 141–156 (QGPQPSGAPQCNLNQE) the chain is Extracellular. A helical membrane pass occupies residues 157-180 (TWYILASSIGSFFAPCLIMILVYL). Topologically, residues 181 to 361 (RIYLIAKRSH…LSREKRFTFV (181 aa)) are cytoplasmic. Disordered regions lie at residues 193-212 (GPRAKGAPGKSKFKQSRQVP) and 230-319 (AAGE…LQQP). Positions 280 to 300 (SLEEEAEEEEEGEEEREEECE) are enriched in acidic residues. Over residues 301–319 (PQALPASPASACSPPLQQP) the composition is skewed to low complexity. Residues 362-385 (LAVVIGVFVLCWFPFFFSYSLGAI) traverse the membrane as a helical segment. Residues 386 to 394 (CPQQCKVPH) lie on the Extracellular side of the membrane. Residues 395-397 (DLF) form a helical membrane-spanning segment.

The protein belongs to the G-protein coupled receptor 1 family. Adrenergic receptor subfamily. ADRA2B sub-subfamily. In terms of assembly, interacts with RAB26. Interacts with PPP1R9B.

The protein resides in the cell membrane. In terms of biological role, alpha-2 adrenergic receptors mediate the catecholamine-induced inhibition of adenylate cyclase through the action of G proteins. The protein is Alpha-2B adrenergic receptor (ADRA2B) of Talpa europaea (European mole).